A 478-amino-acid chain; its full sequence is Aspartyl/glutamyl-tRNA(Asn/Gln) amidotransferase subunit B 2 (478 aa).

It belongs to the GatB/GatE family. GatB subfamily. Heterotrimer of A, B and C subunits.

The catalysed reaction is L-glutamyl-tRNA(Gln) + L-glutamine + ATP + H2O = L-glutaminyl-tRNA(Gln) + L-glutamate + ADP + phosphate + H(+). It catalyses the reaction L-aspartyl-tRNA(Asn) + L-glutamine + ATP + H2O = L-asparaginyl-tRNA(Asn) + L-glutamate + ADP + phosphate + 2 H(+). Allows the formation of correctly charged Asn-tRNA(Asn) or Gln-tRNA(Gln) through the transamidation of misacylated Asp-tRNA(Asn) or Glu-tRNA(Gln) in organisms which lack either or both of asparaginyl-tRNA or glutaminyl-tRNA synthetases. The reaction takes place in the presence of glutamine and ATP through an activated phospho-Asp-tRNA(Asn) or phospho-Glu-tRNA(Gln). The chain is Aspartyl/glutamyl-tRNA(Asn/Gln) amidotransferase subunit B 2 (gatB2) from Clostridium acetobutylicum (strain ATCC 824 / DSM 792 / JCM 1419 / IAM 19013 / LMG 5710 / NBRC 13948 / NRRL B-527 / VKM B-1787 / 2291 / W).